The chain runs to 446 residues: Ribosomal protein uS12 methylthiotransferase RimO (446 aa).

The MTTase N-terminal domain occupies 7-118; it reads PKIAFAHLGC…IVEVIERVER (112 aa). The [4Fe-4S] cluster site is built by cysteine 16, cysteine 52, cysteine 81, cysteine 156, cysteine 160, and cysteine 163. The Radical SAM core domain occupies 142-371; sequence TTPAPVAYLR…MELQQPIAQR (230 aa). In terms of domain architecture, TRAM spans 374–440; that stretch reads AAEVGKIVPV…IYDLYGIIPA (67 aa).

This sequence belongs to the methylthiotransferase family. RimO subfamily. [4Fe-4S] cluster serves as cofactor.

The protein resides in the cytoplasm. It catalyses the reaction L-aspartate(89)-[ribosomal protein uS12]-hydrogen + (sulfur carrier)-SH + AH2 + 2 S-adenosyl-L-methionine = 3-methylsulfanyl-L-aspartate(89)-[ribosomal protein uS12]-hydrogen + (sulfur carrier)-H + 5'-deoxyadenosine + L-methionine + A + S-adenosyl-L-homocysteine + 2 H(+). Catalyzes the methylthiolation of an aspartic acid residue of ribosomal protein uS12. The polypeptide is Ribosomal protein uS12 methylthiotransferase RimO (Thermosynechococcus vestitus (strain NIES-2133 / IAM M-273 / BP-1)).